A 639-amino-acid chain; its full sequence is Chaperone protein DnaK (639 aa).

A Phosphothreonine; by autocatalysis modification is found at Thr198. The tract at residues 602–639 (QAKSQAQGGDNADAGKQANATADDVVDAEFEEVKDDKK) is disordered. The span at 625 to 639 (DVVDAEFEEVKDDKK) shows a compositional bias: acidic residues.

This sequence belongs to the heat shock protein 70 family.

Acts as a chaperone. This chain is Chaperone protein DnaK, found in Shewanella baltica (strain OS195).